A 131-amino-acid polypeptide reads, in one-letter code: Glutaredoxin arsenate reductase (131 aa).

Active-site nucleophile residues include Cys8 and Cys80. Cystine bridges form between Cys8–Cys80 and Cys80–Cys82.

The protein belongs to the low molecular weight phosphotyrosine protein phosphatase family. Homodimer.

It catalyses the reaction O-phospho-L-tyrosyl-[protein] + H2O = L-tyrosyl-[protein] + phosphate. It carries out the reaction [glutaredoxin]-dithiol + arsenate + glutathione + H(+) = glutathionyl-S-S-[glutaredoxin] + arsenite + H2O. Reduces arsenate [As(V)] to arsenite [As(III)] using glutathione and glutaredoxin as sources of reducing equivalents. GrxA is the most effective electron donor in vivo compared to other glutaredoxins. Constitutes the major arsenate reductase compared to ArsI1 and ArsI2. Also shows weak phosphatase activity toward p-nitrophenyl phosphate. In Synechocystis sp. (strain ATCC 27184 / PCC 6803 / Kazusa), this protein is Glutaredoxin arsenate reductase (arsC).